Reading from the N-terminus, the 314-residue chain is Carbamate kinase (314 aa).

It belongs to the carbamate kinase family. As to quaternary structure, homodimer.

The enzyme catalyses hydrogencarbonate + NH4(+) + ATP = carbamoyl phosphate + ADP + H2O + H(+). It functions in the pathway metabolic intermediate metabolism; carbamoyl phosphate degradation; CO(2) and NH(3) from carbamoyl phosphate: step 1/1. The protein is Carbamate kinase (CBK) of Trichomonas vaginalis.